The chain runs to 416 residues: Ribulose bisphosphate carboxylase large chain (416 aa).

Substrate is bound by residues Asn-100 and Thr-150. Catalysis depends on Lys-152, which acts as the Proton acceptor. Residue Lys-154 coordinates substrate. The Mg(2+) site is built by Lys-178, Asp-180, and Glu-181. Lys-178 bears the N6-carboxylysine mark. Residue His-271 is the Proton acceptor of the active site. Residues Arg-272, His-304, and Ser-356 each contribute to the substrate site.

This sequence belongs to the RuBisCO large chain family. Type I subfamily. As to quaternary structure, heterohexadecamer of 8 large chains and 8 small chains; disulfide-linked. The disulfide link is formed within the large subunit homodimers. It depends on Mg(2+) as a cofactor. The disulfide bond which can form in the large chain dimeric partners within the hexadecamer appears to be associated with oxidative stress and protein turnover.

Its subcellular location is the plastid. It is found in the chloroplast. The enzyme catalyses 2 (2R)-3-phosphoglycerate + 2 H(+) = D-ribulose 1,5-bisphosphate + CO2 + H2O. It catalyses the reaction D-ribulose 1,5-bisphosphate + O2 = 2-phosphoglycolate + (2R)-3-phosphoglycerate + 2 H(+). Its function is as follows. RuBisCO catalyzes two reactions: the carboxylation of D-ribulose 1,5-bisphosphate, the primary event in carbon dioxide fixation, as well as the oxidative fragmentation of the pentose substrate in the photorespiration process. Both reactions occur simultaneously and in competition at the same active site. This is Ribulose bisphosphate carboxylase large chain (rbcL) from Cheiropleuria bicuspis (Fern).